The following is a 146-amino-acid chain: Large ribosomal subunit protein uL15 (146 aa).

The interval 1-45 (MTIKLHHLRPAPGSKTERTRVGRGEGSKGKTAGRGTKGTKARKNV) is disordered. The segment covering 15–28 (KTERTRVGRGEGSK) has biased composition (basic and acidic residues).

Belongs to the universal ribosomal protein uL15 family. Part of the 50S ribosomal subunit.

Binds to the 23S rRNA. This chain is Large ribosomal subunit protein uL15, found in Mycobacteroides abscessus (strain ATCC 19977 / DSM 44196 / CCUG 20993 / CIP 104536 / JCM 13569 / NCTC 13031 / TMC 1543 / L948) (Mycobacterium abscessus).